The chain runs to 219 residues: MDPAPGVLDPRAAPPALLGTPQAEVLEDVLREQFGPLPQLAAVCRLKRLPSGGYSSTENLQLVLERRRVANAKERERIKNLNRGFARLKALVPFLPQSRKPSKVDILKGATEYIQVLSDLLEGAKDSKKQDPDEQSYSNNSSESHTSSARQLSRNITQHISCAFGLKNEEEGPWADGGSGEPAHACRHSVMSTTEIISPTRSLDRFPEVELLSHRLPQV.

In terms of domain architecture, bHLH spans 65-117 (ERRRVANAKERERIKNLNRGFARLKALVPFLPQSRKPSKVDILKGATEYIQVL). The interval 124–151 (AKDSKKQDPDEQSYSNNSSESHTSSARQ) is disordered. Low complexity predominate over residues 136–148 (SYSNNSSESHTSS).

As to quaternary structure, heterodimer with TCF3/isoform E12. As to expression, germ cells. Expressed in the fetal ovary, but not by a range of other tissues. Expression increases across mid-gestation, rising some 40-fold by the time of primordial follicle formation.

The protein resides in the nucleus. Germline specific transcription factor implicated in postnatal oocyte-specific gene expression. Plays a key regulatory role in the expression of multiple oocyte-specific genes, including those that initiate folliculogenesis and those that encode the zona pellucida (ZP1, ZP2 and ZP3) required for fertilization and early embryonic survival. Essential for oocytes to survive and form primordial follicles. The persistence of FIGLA in adult females suggests that it may regulate additional pathways that are essential for normal ovarian development. Binds to the E-box (5'-CANNTG-3') of the ZPs (ZP1, ZP2, ZP3) promoters. The chain is Factor in the germline alpha (FIGLA) from Homo sapiens (Human).